Consider the following 1645-residue polypeptide: MGLRAGRLASPSRGVLQLLRLPLLLLLLLSSGARGAAAQGDTEVPTLYLWKTGPWGRCMGDDCGPGGIQTRAVWCAHVEGWTTLHTNCKQAVRPSNQQNCFKVCDWHKELYDWRLGTWDRCQPVISKSLEKSRECVKGEEGIQVREIMCIQKDKDIPAEDIICEYFEPKPLLEQACLIPCQKDCIVSEFSPWSECSRTCGSGLQHRTRHVVAPPQYGGSGCPNLTEFQVCQSNPCEEDESLYSLQVGPWSACSVPHTRQARQARRRGKNKEREKERGKAVKDPEARELIKKKRNRNRQNRQENRYWDIQIGYQTRDVTCLNRTGKSADLSFCQQERLPMTFQSCVITKECQVSEWLEWSPCSKTCHDVTSPTGTRVRTRTITQFPIGSEKECPALEEKEPCVSQGDGAVLCATYGWRTTEWTECHVDPLLSQQDKRRANQTALCGGGVQTREIYCIQTNDNMLSHGNTQKDKEASKPVDSKLCTGPVPNTTQLCHVPCPIECEVSPWSAWGPCTYENCNDQQGKKGFKLRKRRITNEPTGGSGATGNCPHLLEAIPCEEPSCYDWKSVRLGDCEPDNGKSCGPGTQVQEVVCINSDGEEVDRQLCRDAIFPIPVACDAPCPKDCVLSAWSSWSSCSHTCSGKTTEGKQTRARSILAYAGEEGGIRCPNISALQEVRSCNEHPCTVYHWQTGPWGQCIEDTSVSSFNTTTTWNGEASCSVGMQTRKVICVRVNVGQVGPKKCPESLRPETVRPCLLPCRKDCVVTPYSDWTPCPSSCREGDSGARKQSRQRVIIQLPANGGKECSDPLYEEKACEAPPTCHSYRWKTHKWRRCQLVPWSIQQDVPGAQEGCGPGRQARAITCRKQDGGQASIQECLQYAGPVPALTQACQIPCQDDCQFTSWSKFSSCNGDCGAVRTRKRAIVGKSKKKEKCKNSHLYPLIETQYCPCDKYNAQPVGNWSDCILPEGKAEVLLGMKVQGDSKECGQGYRYQAMACYDQNGRLVETSRCNSHGYIEEACIIPCPSDCKLSEWSNWSRCSKSCGSGVKVRSKWLREKPYNGGRPCPKLDHVNQAQVYEVVPCHSDCNQYIWVTEPWSVCKVTFVDMRDNCGEGVQTRKVRCMQNTADGPSEHVEDYLCDPEDMPLGSRECKLPCPEDCVISEWGPWTCALPCNPSGSRQRSADPIRQPADEGRACPDAVEKEPCSLNKNCYHYDYNVTDWSTCQLSEKAVCGNGIKTRMLDCVRSDGKSVDLKYCEELGLEKNWPMNTSCTVECPVNCQLSDWSSWSQCSQTCGLTGKMIRKRTVTQPFQGDGRPCPSLMEQSKPCPVKPCYRWQYGQWSPCQVQEAQCGEGTRTRNISCVVSDGSAEDFSKVVDEEFCANTELIIDGNKQIVLEETCTQPCPGDCYLNDWSSWSLCQLTCVNGEDLGFGGIQVRSRAVIIQELENQHLCPEQMLETKSCDDGQCYEYKWVASAWKGSSRTVWCQRSDGINVTGGCLVVSQPDTDRSCNPPCSQPHSYCSEMKTCRCEEGYTEVMSSNSTLEQCTLIPVVVIPTVEDKRGDVKTSRAVHPTQPSINPAGRGRTWFLQPFGPDGRLKTWVYGVAAGAFVLLVFIVSMIYLACKKPKKPQRRQNNRLKPLTLAYDGDADM.

An N-terminal signal peptide occupies residues 1-38; that stretch reads MGLRAGRLASPSRGVLQLLRLPLLLLLLLSSGARGAAA. The Extracellular segment spans residues 39–1595; it reads QGDTEVPTLY…FGPDGRLKTW (1557 aa). 3 consecutive TSP type-1 domains span residues 46 to 105, 109 to 181, and 183 to 236; these read TLYL…KVCD, ELYD…IPCQ, and DCIV…NPCE. A glycan (N-linked (GlcNAc...) asparagine) is linked at Asn-223. The disordered stretch occupies residues 255–300; sequence PHTRQARQARRRGKNKEREKERGKAVKDPEARELIKKKRNRNRQNR. Residues 256–304 are a coiled coil; it reads HTRQARQARRRGKNKEREKERGKAVKDPEARELIKKKRNRNRQNRQENR. The span at 258 to 269 shows a compositional bias: basic residues; sequence RQARQARRRGKN. Positions 270–288 are enriched in basic and acidic residues; the sequence is KEREKERGKAVKDPEAREL. The segment covering 289–298 has biased composition (basic residues); sequence IKKKRNRNRQ. Asn-321 is a glycosylation site (N-linked (GlcNAc...) asparagine). TSP type-1 domains lie at 349–405, 412–499, 501–563, 623–684, 685–758, 760–820, 821–893, 895–948, 949–1022, 1024–1084, 1085–1152, 1154–1208, 1209–1272, 1274–1329, 1330–1400, and 1402–1463; these read ECQV…VSQG, ATYG…VPCP, ECEV…PSCY, DCVL…HPCT, VYHW…LPCR, DCVV…PTCH, SYRW…IPCQ, DCQF…CPCD, KYNA…IPCP, DCKL…SDCN, QYIW…LPCP, DCVI…KNCY, HYDY…VECP, NCQL…KPCY, RWQY…QPCP, and DCYL…GQCY. 3 cysteine pairs are disulfide-bonded: Cys-424–Cys-494, Cys-444–Cys-498, and Cys-455–Cys-483. N-linked (GlcNAc...) asparagine glycosylation is present at Asn-439. A glycan (N-linked (GlcNAc...) asparagine) is linked at Asn-489. 2 cysteine pairs are disulfide-bonded: Cys-624–Cys-666 and Cys-635–Cys-639. Asn-668 carries N-linked (GlcNAc...) asparagine glycosylation. 7 disulfides stabilise this stretch: Cys-678/Cys-683, Cys-696/Cys-753, Cys-717/Cys-757, Cys-728/Cys-741, Cys-761/Cys-803, Cys-772/Cys-776, and Cys-813/Cys-819. A glycan (N-linked (GlcNAc...) asparagine) is linked at Asn-706. Asn-957 is a glycosylation site (N-linked (GlcNAc...) asparagine). Intrachain disulfides connect Cys-961–Cys-1017, Cys-983–Cys-1021, Cys-994–Cys-1007, Cys-1025–Cys-1062, Cys-1036–Cys-1040, and Cys-1079–Cys-1083. N-linked (GlcNAc...) asparagine glycosylation occurs at Asn-1032. A disulfide bridge connects residues Cys-1201 and Cys-1207. N-linked (GlcNAc...) asparagine glycosylation occurs at Asn-1213. Disulfide bonds link Cys-1220–Cys-1267, Cys-1228–Cys-1271, Cys-1239–Cys-1252, Cys-1275–Cys-1313, Cys-1286–Cys-1290, Cys-1323–Cys-1328, Cys-1339–Cys-1395, Cys-1346–Cys-1399, Cys-1357–Cys-1376, Cys-1403–Cys-1447, Cys-1414–Cys-1418, and Cys-1457–Cys-1462. Asn-1264 carries an N-linked (GlcNAc...) asparagine glycan. A glycan (N-linked (GlcNAc...) asparagine) is linked at Asn-1354. Residues Asn-1488 and Asn-1535 are each glycosylated (N-linked (GlcNAc...) asparagine). Residues 1596-1616 traverse the membrane as a helical segment; it reads VYGVAAGAFVLLVFIVSMIYL. At 1617–1645 the chain is on the cytoplasmic side; the sequence is ACKKPKKPQRRQNNRLKPLTLAYDGDADM.

Post-translationally, proteolytic cleavage in the extracellular region generates a 210 kDa soluble form. Extensively N-glycosylated. In terms of tissue distribution, detected on kidney podocytes along the glomerular capillary wall (at protein level).

The protein localises to the cell membrane. It localises to the cell projection. The protein resides in the secreted. Functionally, plays a role in actin cytoskeleton rearrangement. Its function is as follows. The soluble form promotes endothelial cell migration and filopodia formation during sprouting angiogenesis via a FAK-dependent mechanism. The sequence is that of Thrombospondin type-1 domain-containing protein 7A (Thsd7a) from Mus musculus (Mouse).